The sequence spans 287 residues: Ribosomal RNA small subunit methyltransferase A (287 aa).

The S-adenosyl-L-methionine site is built by Asn35, Val37, Gly62, Glu83, Asp113, and Asn131.

Belongs to the class I-like SAM-binding methyltransferase superfamily. rRNA adenine N(6)-methyltransferase family. RsmA subfamily.

The protein resides in the cytoplasm. It carries out the reaction adenosine(1518)/adenosine(1519) in 16S rRNA + 4 S-adenosyl-L-methionine = N(6)-dimethyladenosine(1518)/N(6)-dimethyladenosine(1519) in 16S rRNA + 4 S-adenosyl-L-homocysteine + 4 H(+). In terms of biological role, specifically dimethylates two adjacent adenosines (A1518 and A1519) in the loop of a conserved hairpin near the 3'-end of 16S rRNA in the 30S particle. May play a critical role in biogenesis of 30S subunits. In Thermobifida fusca (strain YX), this protein is Ribosomal RNA small subunit methyltransferase A.